The sequence spans 382 residues: Na(+)/H(+) antiporter NhaA (382 aa).

11 consecutive transmembrane segments (helical) span residues 14-34, 47-67, 87-107, 117-137, 146-166, 171-191, 205-225, 247-267, 271-291, 321-341, and 353-373; these read AGGILLVIAAAIAMVIANSAM, FGMSVSHWINDGLMAVFFLLI, IFPAIAAVGGMLAPALIYVAF, GWAIPAATDIAFALGIMALLG, VFLLALAIIDDLGVVVIIALF, LSTIALTIGFIMTGVLFMLNA, LILWIAVLKSGVHATLAGVVI, ALHPYVAFAILPVFAFANAGI, GVSLAGLTSMLPLGVALGLFL, IFAVSVLCGIGFTMSIFISSL, and YARLGILMGSTTAALLGYSLL.

This sequence belongs to the NhaA Na(+)/H(+) (TC 2.A.33) antiporter family.

It is found in the cell inner membrane. It catalyses the reaction Na(+)(in) + 2 H(+)(out) = Na(+)(out) + 2 H(+)(in). In terms of biological role, na(+)/H(+) antiporter that extrudes sodium in exchange for external protons. The polypeptide is Na(+)/H(+) antiporter NhaA (Vibrio cholerae serotype O1 (strain ATCC 39541 / Classical Ogawa 395 / O395)).